Here is a 282-residue protein sequence, read N- to C-terminus: Elongation factor Ts (282 aa).

The involved in Mg(2+) ion dislocation from EF-Tu stretch occupies residues 79–82 (TDFV).

It belongs to the EF-Ts family.

It localises to the cytoplasm. In terms of biological role, associates with the EF-Tu.GDP complex and induces the exchange of GDP to GTP. It remains bound to the aminoacyl-tRNA.EF-Tu.GTP complex up to the GTP hydrolysis stage on the ribosome. The polypeptide is Elongation factor Ts (Shewanella sediminis (strain HAW-EB3)).